A 355-amino-acid polypeptide reads, in one-letter code: Guanine nucleotide-binding protein subunit alpha-14 (355 aa).

Residues 34–355 (RELKLLLLGT…QLNLREFNLV (322 aa)) enclose the G-alpha domain. A G1 motif region spans residues 37–50 (KLLLLGTGESGKST). Residues 42-49 (GTGESGKS), 176-182 (LRVRVPT), 201-205 (DVGGQ), 270-273 (NKKD), and A327 each bind GTP. S49 contacts Mg(2+). Residues 174–182 (DVLRVRVPT) are G2 motif. Residue R179 is modified to ADP-ribosylarginine; by cholera toxin. T182 contacts Mg(2+). Residues 197–206 (FRMVDVGGQR) are G3 motif. A G4 motif region spans residues 266–273 (ILFLNKKD). The G5 motif stretch occupies residues 325–330 (TCATDT).

The protein belongs to the G-alpha family. G(q) subfamily. G proteins are composed of 3 units; alpha, beta and gamma. The alpha chain contains the guanine nucleotide binding site.

Functionally, guanine nucleotide-binding proteins (G proteins) are involved as modulators or transducers in various transmembrane signaling systems. This Homo sapiens (Human) protein is Guanine nucleotide-binding protein subunit alpha-14 (GNA14).